Consider the following 2594-residue polypeptide: Immunoglobulin superfamily member 10 (2594 aa).

The N-terminal stretch at 1–25 (MQKRGREVSCLLISLTAICLVVTPG) is a signal peptide. An LRRNT domain is found at 29 to 56 (CPRRCACYVPTEVHCTFRYLTSIPDGIP). LRR repeat units lie at residues 58–79 (NVER…DFSG), 82–103 (RLEL…TFSG), 106–127 (SLQV…TLYG), 130–151 (SLTR…AFYG), 154–175 (LLRL…TFVS), and 186–207 (FIKY…MVSS). Residues 219 to 281 (NPWTCDCHLK…VPSGSFLCTK (63 aa)) form the LRRCT domain. Asparagine 439 is a glycosylation site (N-linked (GlcNAc...) asparagine). 2 consecutive Ig-like C2-type domains span residues 461-567 (PKAE…YRIT) and 571-661 (PYVE…FQVS). 2 disulfides stabilise this stretch: cysteine 497–cysteine 551 and cysteine 595–cysteine 645. A glycan (N-linked (GlcNAc...) asparagine) is linked at asparagine 627. Basic and acidic residues predominate over residues 670-685 (IEHDRDIDGSGLEEPK). Disordered stretches follow at residues 670-725 (IEHD…RDLT) and 963-1008 (VSSN…GRER). Basic residues predominate over residues 715-725 (IHKKNKHRDLT). The segment covering 972-984 (TTKDPGFSKRPSD) has biased composition (basic and acidic residues). The span at 985–1003 (SHTTAPSLFQTPRNNSTGN) shows a compositional bias: polar residues. Residue asparagine 1044 is glycosylated (N-linked (GlcNAc...) asparagine). Disordered stretches follow at residues 1228–1251 (TATK…PSTT), 1333–1364 (VRSK…GYST), and 1428–1457 (SQES…PSPP). Over residues 1333–1342 (VRSKKAKDQT) the composition is skewed to basic and acidic residues. Positions 1355–1364 (TPRQISGYST) are enriched in polar residues. Ig-like C2-type domains follow at residues 1619 to 1710 (PRII…VTLS), 1715 to 1807 (PARI…VKIQ), 1812 to 1901 (PPVI…RRVV), 1912 to 2005 (PRIE…VRLR), 2008 to 2106 (PAKI…VHLT), 2112 to 2200 (PRIR…YKLD), 2205 to 2302 (PPLI…LKVL), 2308 to 2398 (PTFR…ILLE), 2403 to 2493 (PVIL…VPVT), and 2499 to 2592 (PRII…TYIQ). Cystine bridges form between cysteine 1641–cysteine 1694, cysteine 1738–cysteine 1791, and cysteine 1835–cysteine 1888. One copy of the LRR 11 repeat lies at 1658–1681 (SGREISRGIQKTRFHVLPNGTLSI). Asparagine 1676, asparagine 1780, asparagine 1870, and asparagine 1933 each carry an N-linked (GlcNAc...) asparagine glycan. Intrachain disulfides connect cysteine 1934–cysteine 1987, cysteine 2031–cysteine 2090, cysteine 2134–cysteine 2184, cysteine 2232–cysteine 2284, cysteine 2330–cysteine 2382, cysteine 2425–cysteine 2477, and cysteine 2521–cysteine 2576. A glycan (N-linked (GlcNAc...) asparagine) is linked at asparagine 2072. Asparagine 2364 carries N-linked (GlcNAc...) asparagine glycosylation. Tyrosine 2574 carries the phosphotyrosine modification.

In the embryo, expressed in the nasal mesenchyme.

It is found in the secreted. Involved in the control of early migration of neurons expressing gonadotropin-releasing hormone (GNRH neurons). May be involved in the maintenance of osteochondroprogenitor cells pool. The chain is Immunoglobulin superfamily member 10 (Igsf10) from Mus musculus (Mouse).